We begin with the raw amino-acid sequence, 595 residues long: Probable carotenoid cleavage dioxygenase 4, chloroplastic (595 aa).

A chloroplast-targeting transit peptide spans 1–34 (MDSVSSSSFLSSTFSLHHSLLRRRSSSPTLLRIN). A disordered region spans residues 41-74 (RSPITNPSDNNDRRNKPKTLHNRTNHTLVSSPPK). Residues 55–64 (NKPKTLHNRT) are compositionally biased toward basic residues. His287, His336, His404, and His583 together coordinate Fe cation.

Belongs to the carotenoid oxygenase family. As to quaternary structure, interacts with VAR3. Interacts with PGM48. Fe(2+) serves as cofactor. Mostly expressed in flowers (e.g. sepals and petals), siliques, seeds, leaves and cotyledons.

Its subcellular location is the plastid. It localises to the chloroplast. It is found in the plastoglobule. Its function is as follows. May be involved in carotenoid cleavage. This Arabidopsis thaliana (Mouse-ear cress) protein is Probable carotenoid cleavage dioxygenase 4, chloroplastic (CCD4).